Reading from the N-terminus, the 892-residue chain is Dystroglycan 1 (892 aa).

Positions 1 to 27 (MRMSAGLSLLLPLWGRTFLLLLSVAMA) are cleaved as a signal peptide. Residues 28 to 750 (QSHWPSEAGR…SSEDDVYLHT (723 aa)) are Extracellular-facing. Residues 30 to 405 (HWPSEAGRDW…GQIRPTMTIP (376 aa)) are required for laminin recognition. Residues 46-68 (SMHSVLSDLHEAVPTVVGIPDGI) are O-glycosylated at one site. Residue Asn-138 is glycosylated (N-linked (GlcNAc...) asparagine). Cysteines 179 and 261 form a disulfide. A mucin-like domain region spans residues 313–482 (ATPTPVTAIG…PPTRIRTTTS (170 aa)). O-linked (Man6P...) threonine glycosylation is found at Thr-314, Thr-316, and Thr-376. The disordered stretch occupies residues 378–497 (TLGPIQPTRV…GEPNQRPELK (120 aa)). A compositionally biased stretch (low complexity) spans 410–444 (PTAVATPPTTTTKKPRVSTPKPATPSTDSSTTTTR). Residues 460–482 (TTKAPITRLETASPPTRIRTTTS) are O-glycosylated at seven sites with GalNAc. The Peptidase S72 domain occupies 600-709 (RAPARFKAKF…SSIAVTGSGS (110 aa)). Residues Asn-638, Asn-646, and Asn-658 are each glycosylated (N-linked (GlcNAc...) asparagine). A disulfide bond links Cys-666 and Cys-710. Residues 721 to 742 (PRRVPSEVPSTDVPDRDPEKSS) are disordered. The segment covering 733–742 (VPDRDPEKSS) has biased composition (basic and acidic residues). Residues 751–771 (VIPAVVVAAILLIAGIIAMIC) form a helical membrane-spanning segment. Residues 772–892 (YRKKRKGKLT…YRSPPPYVPP (121 aa)) lie on the Cytoplasmic side of the membrane. The Nuclear localization signal signature appears at 773–779 (RKKRKGK). The residue at position 787 (Thr-787) is a Phosphothreonine. A required for interaction with CAV3 region spans residues 816–892 (LQEEKAPLPP…YRSPPPYVPP (77 aa)). The tract at residues 820–892 (KAPLPPPEYP…YRSPPPYVPP (73 aa)) is disordered. Positions 829–843 (PNQSVPETTPLNQDT) are enriched in polar residues. Pro residues predominate over residues 856–867 (NAPPYQPPPPFT). A required for binding DMD and UTRN region spans residues 877–892 (PKNMTPYRSPPPYVPP). The short motif at 886-889 (PPPY) is the PPXY motif element. Tyr-889 bears the Phosphotyrosine; by SRC mark.

In terms of assembly, monomer. Heterodimer of alpha- and beta-dystroglycan subunits which are the central components of the dystrophin-glycoprotein complex. This complex then can form a dystrophin-associated glycoprotein complex (DGC) which is composed of three subcomplexes: a cytoplasmic complex comprised of DMD (or UTRN), DTNA and a number of syntrophins, such as SNTB1, SNTB2, SNTG1 and SNTG2, the transmembrane dystroglycan complex, and the sarcoglycan-sarcospan complex. Interacts (via the N-terminal of alphaDAG1) with LARGE1; the interaction enhances laminin binding. Interacts with SGCD. Interacts with AGR2 and AGR3. Interacts (betaDAG1) with DMD; the interaction is inhibited by phosphorylation on the PPXY motif. Interacts (betaDAG1, via its PPXY motif) with UTRN (via its WWW and ZZ domains); the interaction is inhibited by phosphorylation on the PPXY motif. Interacts (betaDAG1, via its phosphorylated PPXY motif) with the SH2 domain-containing proteins, FYN, CSK, NCK and SHC. Interacts (betaDAG1) with CAV3 (via a central WW-like domain); the interaction disrupts the binding of DMD. BetaDAG1 directly interacts with ANK3, but not with ANK2; this interaction does not interfere with DMD-binding and is required for retention at costameres. Identified in a dystroglycan complex that contains at least PRX, DRP2, UTRN, DMD and DAG1. Interacts with POMGNT1. BetaDAG1 interacts with CD93. O-glycosylated. POMGNT1 catalyzes the initial addition of N-acetylglucosamine, giving rise to the GlcNAc(beta1-2)Man(alpha1-)O-Ser/Thr moiety and thus providing the necessary basis for the addition of further carbohydrate moieties. Heavily O-glycosylated comprising of up to two thirds of its mass and the carbohydrate composition differs depending on tissue type. Mucin-type O-glycosylation is important for ligand binding activity. O-mannosylation is found in high abundance in both brain and muscle where the most abundant glycan is Sia-alpha-2-3-Gal-beta-1-4-Glc-NAc-beta-1-2-Man. In muscle, glycosylation on Thr-314, Thr-316 and Thr-376 by a phosphorylated O-mannosyl glycan with the structure 2-(N-acetylamido)-2-deoxygalactosyl-beta-1,3-2-(N-acetylamido)-2-deoxyglucosyl-beta-1,4-6-phosphomannose is mediated by like-acetylglucosaminyltransferase (LARGE1) protein amd is required for laminin binding. O-glycosylated in the N-terminal region with a core 1 or possibly core 8 glycan. The brain form displays a unique glycosylation pattern which is absent in other tissues; this form shows enhanced binding to laminin LAMA5 compared to the skeletal muscle form. In terms of processing, N-glycosylated. Post-translationally, autolytic cleavage produces the alpha and beta subunits. In cutaneous cells, as well as in certain pathological conditions, shedding of beta-dystroglycan can occur releasing a peptide of about 30 kDa. SRC-mediated phosphorylation of the PPXY motif of the beta subunit recruits SH2 domain-containing proteins, but inhibits binding to WWW domain-containing proteins, DMD and UTRN. This phosphorylation also inhibits nuclear entry.

Its subcellular location is the secreted. The protein localises to the extracellular space. It is found in the cell membrane. It localises to the cytoplasm. The protein resides in the cytoskeleton. Its subcellular location is the nucleus. The protein localises to the nucleoplasm. It is found in the sarcolemma. It localises to the postsynaptic cell membrane. The dystroglycan complex is involved in a number of processes including laminin and basement membrane assembly, sarcolemmal stability, cell survival, peripheral nerve myelination, nodal structure, cell migration, and epithelial polarization. In terms of biological role, extracellular peripheral glycoprotein that acts as a receptor for extracellular matrix proteins containing laminin-G domains. Receptor for laminin-2 (LAMA2) and agrin in peripheral nerve Schwann cells. Also acts as a receptor for laminin LAMA5. Its function is as follows. Transmembrane protein that plays important roles in connecting the extracellular matrix to the cytoskeleton. Acts as a cell adhesion receptor in both muscle and non-muscle tissues. Receptor for both DMD and UTRN and, through these interactions, scaffolds axin to the cytoskeleton. Also functions in cell adhesion-mediated signaling and implicated in cell polarity. The protein is Dystroglycan 1 of Canis lupus familiaris (Dog).